We begin with the raw amino-acid sequence, 371 residues long: Queuine tRNA-ribosyltransferase (371 aa).

Residue Asp-90 is the Proton acceptor of the active site. Residues 90-94 (DSGGF), Asp-144, Gln-188, and Gly-215 contribute to the substrate site. An RNA binding region spans residues 246–252 (GVGTPED). Asp-265 serves as the catalytic Nucleophile. The segment at 270 to 274 (TRNAR) is RNA binding; important for wobble base 34 recognition. Zn(2+) is bound by residues Cys-303, Cys-305, Cys-308, and His-334.

The protein belongs to the queuine tRNA-ribosyltransferase family. Homodimer. Within each dimer, one monomer is responsible for RNA recognition and catalysis, while the other monomer binds to the replacement base PreQ1. Zn(2+) serves as cofactor.

The enzyme catalyses 7-aminomethyl-7-carbaguanine + guanosine(34) in tRNA = 7-aminomethyl-7-carbaguanosine(34) in tRNA + guanine. The protein operates within tRNA modification; tRNA-queuosine biosynthesis. Catalyzes the base-exchange of a guanine (G) residue with the queuine precursor 7-aminomethyl-7-deazaguanine (PreQ1) at position 34 (anticodon wobble position) in tRNAs with GU(N) anticodons (tRNA-Asp, -Asn, -His and -Tyr). Catalysis occurs through a double-displacement mechanism. The nucleophile active site attacks the C1' of nucleotide 34 to detach the guanine base from the RNA, forming a covalent enzyme-RNA intermediate. The proton acceptor active site deprotonates the incoming PreQ1, allowing a nucleophilic attack on the C1' of the ribose to form the product. After dissociation, two additional enzymatic reactions on the tRNA convert PreQ1 to queuine (Q), resulting in the hypermodified nucleoside queuosine (7-(((4,5-cis-dihydroxy-2-cyclopenten-1-yl)amino)methyl)-7-deazaguanosine). In Neisseria meningitidis serogroup B (strain ATCC BAA-335 / MC58), this protein is Queuine tRNA-ribosyltransferase.